We begin with the raw amino-acid sequence, 400 residues long: uncharacterized protein (400 aa).

One can recognise a TR mART core domain in the interval 161–380 (NDLLNIIDIV…YVVKVIVMRL (220 aa)).

This is an uncharacterized protein from Acanthamoeba polyphaga (Amoeba).